The chain runs to 288 residues: Glucose-1-phosphate thymidylyltransferase (288 aa).

Glycine 8 is a dTDP-alpha-D-glucose binding site. DTTP contacts are provided by glycine 8, glycine 11, threonine 12, arginine 13, lysine 23, glutamine 24, glutamine 80, glycine 85, and aspartate 108. DTDP-alpha-D-glucose is bound by residues lysine 23, glutamine 24, glutamine 80, glycine 85, aspartate 108, asparagine 109, glycine 143, glutamate 158, lysine 159, valine 169, and aspartate 222. Aspartate 108 lines the Mg(2+) pocket. Aspartate 222 contributes to the Mg(2+) binding site.

The protein belongs to the glucose-1-phosphate thymidylyltransferase family. It depends on Mg(2+) as a cofactor.

It carries out the reaction dTTP + alpha-D-glucose 1-phosphate + H(+) = dTDP-alpha-D-glucose + diphosphate. The protein operates within carbohydrate biosynthesis; dTDP-L-rhamnose biosynthesis. Catalyzes the conversion of glucose-1-phosphate and dTTP to dTDP-glucose and pyrophosphate. Involved in the biosynthesis of the dTDP-L-rhamnose which is a component of the critical linker, D-N-acetylglucosamine-L-rhamnose disaccharide, which connects the galactan region of arabinogalactan to peptidoglycan via a phosphodiester linkage. This chain is Glucose-1-phosphate thymidylyltransferase (rmlA), found in Mycolicibacterium smegmatis (strain ATCC 700084 / mc(2)155) (Mycobacterium smegmatis).